A 489-amino-acid polypeptide reads, in one-letter code: Transmembrane protein 161A (489 aa).

The signal sequence occupies residues 1–23; it reads MAVMGIQMVVTLLVASLMQRVSP. Residues 24–98 are Extracellular-facing; that stretch reads HYSFGRWLLC…INTMDALVLR (75 aa). Residue Asn-34 is glycosylated (N-linked (GlcNAc...) asparagine). The chain crosses the membrane as a helical span at residues 99–119; it reads YFLEYQWFIDFALYSTIIYLF. Residues 120–134 lie on the Cytoplasmic side of the membrane; sequence TEAYYCVVDAQNEIN. A helical transmembrane segment spans residues 135 to 155; sequence IGVLWCLMSIIFSIKVLFTVM. The Extracellular portion of the chain corresponds to 156-166; sequence KHYFRSEEGGE. Residues 167-187 form a helical membrane-spanning segment; the sequence is RSVCMTFAFFFLLIAMIVTIV. Topologically, residues 188–224 are cytoplasmic; sequence RDEYLEFGLEPGLASVCHNLENFLAQQGWQWSMPFVK. The chain crosses the membrane as a helical span at residues 225–245; that stretch reads LAFKIALVALCAFLGGCLTFP. At 246 to 264 the chain is on the extracellular side; it reads GLRLAQTHLDALKMAADRP. Residues 265–285 form a helical membrane-spanning segment; it reads MLQLLLHMSFLPPVIVVVLWI. Over 286–304 the chain is Cytoplasmic; that stretch reads RPITRDFLLNAPMGKESVE. Residues 305–325 traverse the membrane as a helical segment; that stretch reads LMSNSAYNTFRLWIIVLLCLL. The Extracellular segment spans residues 326–370; it reads RFCLTRFHLQAYLCLADRWVEQMKREAGRISMLEIQRKISRIFCY. A helical membrane pass occupies residues 371-391; sequence LTVVALQYLAPVILTFHCVFM. Over 392-459 the chain is Cytoplasmic; sequence LKSLGDYSWG…GLFTPLFFRG (68 aa). Positions 413–432 are disordered; the sequence is VDSSPVQSHSPTSEEEEDTE. The helical transmembrane segment at 460-480 threads the bilayer; it reads IFSFLTWWVSVCQIITSLFGL. Residues 481-489 lie on the Extracellular side of the membrane; the sequence is YFHQYLGAS.

Belongs to the TMEM161 family.

Its subcellular location is the membrane. In terms of biological role, may play a role in protection against oxidative stress. This Xenopus laevis (African clawed frog) protein is Transmembrane protein 161A (tmem161a).